Reading from the N-terminus, the 25-residue chain is Antimicrobial peptide 2 (25 aa).

As to expression, expressed by the skin glands.

It is found in the secreted. In terms of biological role, has very strong antibacterial activity against Gram-positive bacterium S.aureus and very weak activity against Gram-negative bacterium E.coli. This is Antimicrobial peptide 2 from Xenopus tropicalis (Western clawed frog).